We begin with the raw amino-acid sequence, 331 residues long: Ketol-acid reductoisomerase (NADP(+)) (331 aa).

Positions 2–182 constitute a KARI N-terminal Rossmann domain; it reads IKKYYDADCN…GAGRAGILET (181 aa). NADP(+) contacts are provided by residues 25-28, arginine 48, and serine 51; that span reads YGSQ. Residue histidine 108 is part of the active site. An NADP(+)-binding site is contributed by glycine 134. Residues 183 to 329 form the KARI C-terminal knotted domain; that stretch reads TFREETETDL…AELRKMMSWI (147 aa). The Mg(2+) site is built by aspartate 191, glutamate 195, glutamate 227, and glutamate 231. Serine 252 contributes to the substrate binding site.

Belongs to the ketol-acid reductoisomerase family. Mg(2+) serves as cofactor.

The enzyme catalyses (2R)-2,3-dihydroxy-3-methylbutanoate + NADP(+) = (2S)-2-acetolactate + NADPH + H(+). The catalysed reaction is (2R,3R)-2,3-dihydroxy-3-methylpentanoate + NADP(+) = (S)-2-ethyl-2-hydroxy-3-oxobutanoate + NADPH + H(+). It functions in the pathway amino-acid biosynthesis; L-isoleucine biosynthesis; L-isoleucine from 2-oxobutanoate: step 2/4. It participates in amino-acid biosynthesis; L-valine biosynthesis; L-valine from pyruvate: step 2/4. Its function is as follows. Involved in the biosynthesis of branched-chain amino acids (BCAA). Catalyzes an alkyl-migration followed by a ketol-acid reduction of (S)-2-acetolactate (S2AL) to yield (R)-2,3-dihydroxy-isovalerate. In the isomerase reaction, S2AL is rearranged via a Mg-dependent methyl migration to produce 3-hydroxy-3-methyl-2-ketobutyrate (HMKB). In the reductase reaction, this 2-ketoacid undergoes a metal-dependent reduction by NADPH to yield (R)-2,3-dihydroxy-isovalerate. The sequence is that of Ketol-acid reductoisomerase (NADP(+)) from Brachyspira hyodysenteriae (strain ATCC 49526 / WA1).